Here is a 145-residue protein sequence, read N- to C-terminus: Large ribosomal subunit protein uL14m (145 aa).

Residues 1 to 30 constitute a mitochondrion transit peptide; the sequence is MAVLTGLFGFFAYVRGAVSQRCFSTSGSLS.

This sequence belongs to the universal ribosomal protein uL14 family. In terms of assembly, component of the mitochondrial ribosome large subunit (39S) which comprises a 16S rRNA and about 50 distinct proteins. Interacts with MALSU1.

It localises to the mitochondrion. In terms of biological role, may form part of 2 intersubunit bridges in the assembled ribosome. Upon binding to MALSU1, intersubunit bridge formation is blocked, preventing ribosome formation and repressing translation. In Rattus norvegicus (Rat), this protein is Large ribosomal subunit protein uL14m (Mrpl14).